Consider the following 345-residue polypeptide: N-acetyl-gamma-glutamyl-phosphate reductase (345 aa).

The active site involves C149.

This sequence belongs to the NAGSA dehydrogenase family. Type 1 subfamily.

Its subcellular location is the cytoplasm. It catalyses the reaction N-acetyl-L-glutamate 5-semialdehyde + phosphate + NADP(+) = N-acetyl-L-glutamyl 5-phosphate + NADPH + H(+). Its pathway is amino-acid biosynthesis; L-arginine biosynthesis; N(2)-acetyl-L-ornithine from L-glutamate: step 3/4. In terms of biological role, catalyzes the NADPH-dependent reduction of N-acetyl-5-glutamyl phosphate to yield N-acetyl-L-glutamate 5-semialdehyde. In Herminiimonas arsenicoxydans, this protein is N-acetyl-gamma-glutamyl-phosphate reductase.